The following is a 433-amino-acid chain: Pyrimidine-nucleoside phosphorylase (433 aa).

81-83 serves as a coordination point for phosphate; sequence KHS. K(+) is bound by residues G88 and T90. Phosphate-binding positions include T92, 108–110, and T120; that span reads KMS. Substrate is bound by residues R168 and K187. Residues L243, A246, and E255 each coordinate K(+).

This sequence belongs to the thymidine/pyrimidine-nucleoside phosphorylase family. As to quaternary structure, homodimer. Requires K(+) as cofactor.

The enzyme catalyses uridine + phosphate = alpha-D-ribose 1-phosphate + uracil. It catalyses the reaction thymidine + phosphate = 2-deoxy-alpha-D-ribose 1-phosphate + thymine. The catalysed reaction is 2'-deoxyuridine + phosphate = 2-deoxy-alpha-D-ribose 1-phosphate + uracil. Its function is as follows. Catalyzes phosphorolysis of the pyrimidine nucleosides uridine, thymidine and 2'-deoxyuridine with the formation of the corresponding pyrimidine base and ribose-1-phosphate. This Staphylococcus aureus (strain NCTC 8325 / PS 47) protein is Pyrimidine-nucleoside phosphorylase (pdp).